The primary structure comprises 203 residues: Probable GTP-binding protein EngB (203 aa).

The region spanning 24–199 (DGSEVAFAGR…HTVIETWLGL (176 aa)) is the EngB-type G domain. GTP is bound by residues 32 to 39 (GRSNAGKS), 59 to 63 (GRTQQ), 77 to 80 (DLPG), 144 to 147 (TKAD), and 178 to 180 (FSS). Mg(2+) is bound by residues serine 39 and threonine 61.

This sequence belongs to the TRAFAC class TrmE-Era-EngA-EngB-Septin-like GTPase superfamily. EngB GTPase family. It depends on Mg(2+) as a cofactor.

Its function is as follows. Necessary for normal cell division and for the maintenance of normal septation. This Xylella fastidiosa (strain Temecula1 / ATCC 700964) protein is Probable GTP-binding protein EngB.